We begin with the raw amino-acid sequence, 245 residues long: Uridylate kinase (245 aa).

20–23 (KLSG) is a binding site for ATP. Position 60 (Gly-60) interacts with UMP. ATP is bound by residues Gly-61 and Arg-65. UMP is bound by residues Asp-80 and 141–148 (AGLPYFST). ATP-binding residues include Tyr-175 and Asp-178.

Belongs to the UMP kinase family. In terms of assembly, homohexamer.

It localises to the cytoplasm. The enzyme catalyses UMP + ATP = UDP + ADP. Its pathway is pyrimidine metabolism; CTP biosynthesis via de novo pathway; UDP from UMP (UMPK route): step 1/1. Inhibited by UTP. In terms of biological role, catalyzes the reversible phosphorylation of UMP to UDP. The sequence is that of Uridylate kinase from Paenarthrobacter aurescens (strain TC1).